Reading from the N-terminus, the 390-residue chain is Phosphopentomutase (390 aa).

Mn(2+)-binding residues include Asp-11, Asp-283, His-288, Asp-324, His-325, and His-336.

The protein belongs to the phosphopentomutase family. Requires Mn(2+) as cofactor.

The protein localises to the cytoplasm. The enzyme catalyses 2-deoxy-alpha-D-ribose 1-phosphate = 2-deoxy-D-ribose 5-phosphate. It carries out the reaction alpha-D-ribose 1-phosphate = D-ribose 5-phosphate. It functions in the pathway carbohydrate degradation; 2-deoxy-D-ribose 1-phosphate degradation; D-glyceraldehyde 3-phosphate and acetaldehyde from 2-deoxy-alpha-D-ribose 1-phosphate: step 1/2. Isomerase that catalyzes the conversion of deoxy-ribose 1-phosphate (dRib-1-P) and ribose 1-phosphate (Rib-1-P) to deoxy-ribose 5-phosphate (dRib-5-P) and ribose 5-phosphate (Rib-5-P), respectively. The polypeptide is Phosphopentomutase (Alkaliphilus metalliredigens (strain QYMF)).